The chain runs to 296 residues: Cytidine deaminase (296 aa).

2 CMP/dCMP-type deaminase domains span residues 47 to 167 (TEAE…FGPK) and 186 to 296 (DSSD…VDPV). 88–90 (NLE) provides a ligand contact to substrate. His101 serves as a coordination point for Zn(2+). Residue Glu103 is the Proton donor of the active site. Zn(2+) contacts are provided by Cys128 and Cys131.

The protein belongs to the cytidine and deoxycytidylate deaminase family. In terms of assembly, homodimer. The cofactor is Zn(2+).

The catalysed reaction is cytidine + H2O + H(+) = uridine + NH4(+). It catalyses the reaction 2'-deoxycytidine + H2O + H(+) = 2'-deoxyuridine + NH4(+). In terms of biological role, this enzyme scavenges exogenous and endogenous cytidine and 2'-deoxycytidine for UMP synthesis. This chain is Cytidine deaminase, found in Shewanella sp. (strain W3-18-1).